The chain runs to 270 residues: Phosphonates import ATP-binding protein PhnC (270 aa).

Positions 2–245 constitute an ABC transporter domain; sequence LVIEGLTCRF…IARELYDLEA (244 aa). An ATP-binding site is contributed by 34–41; sequence GRSGAGKS.

The protein belongs to the ABC transporter superfamily. Phosphonates importer (TC 3.A.1.9.1) family. As to quaternary structure, the complex is composed of two ATP-binding proteins (PhnC), two transmembrane proteins (PhnE) and a solute-binding protein (PhnD).

Its subcellular location is the cell inner membrane. It catalyses the reaction phosphonate(out) + ATP + H2O = phosphonate(in) + ADP + phosphate + H(+). Functionally, part of the ABC transporter complex PhnCDE involved in phosphonates import. Responsible for energy coupling to the transport system. This Rhodopseudomonas palustris (strain BisB5) protein is Phosphonates import ATP-binding protein PhnC.